A 504-amino-acid polypeptide reads, in one-letter code: Maturase K (504 aa).

Belongs to the intron maturase 2 family. MatK subfamily.

It is found in the plastid. Its subcellular location is the chloroplast. Functionally, usually encoded in the trnK tRNA gene intron. Probably assists in splicing its own and other chloroplast group II introns. The sequence is that of Maturase K from Rorippa amphibia (Great yellow-cress).